The sequence spans 277 residues: tRNA U34 carboxymethyltransferase (277 aa).

Residues Lys-46, Trp-60, Lys-65, Gly-84, 106–108, 133–134, Tyr-153, and Arg-268 each bind carboxy-S-adenosyl-L-methionine; these read DPS and VE.

The protein belongs to the class I-like SAM-binding methyltransferase superfamily. CmoB family. As to quaternary structure, homotetramer.

It catalyses the reaction carboxy-S-adenosyl-L-methionine + 5-hydroxyuridine(34) in tRNA = 5-carboxymethoxyuridine(34) in tRNA + S-adenosyl-L-homocysteine + H(+). In terms of biological role, catalyzes carboxymethyl transfer from carboxy-S-adenosyl-L-methionine (Cx-SAM) to 5-hydroxyuridine (ho5U) to form 5-carboxymethoxyuridine (cmo5U) at position 34 in tRNAs. The polypeptide is tRNA U34 carboxymethyltransferase (Wolinella succinogenes (strain ATCC 29543 / DSM 1740 / CCUG 13145 / JCM 31913 / LMG 7466 / NCTC 11488 / FDC 602W) (Vibrio succinogenes)).